A 392-amino-acid polypeptide reads, in one-letter code: ATP phosphoribosyltransferase regulatory subunit (392 aa).

The protein belongs to the class-II aminoacyl-tRNA synthetase family. HisZ subfamily. In terms of assembly, heteromultimer composed of HisG and HisZ subunits.

It is found in the cytoplasm. It participates in amino-acid biosynthesis; L-histidine biosynthesis; L-histidine from 5-phospho-alpha-D-ribose 1-diphosphate: step 1/9. Its function is as follows. Required for the first step of histidine biosynthesis. May allow the feedback regulation of ATP phosphoribosyltransferase activity by histidine. This is ATP phosphoribosyltransferase regulatory subunit from Marinomonas sp. (strain MWYL1).